Here is a 142-residue protein sequence, read N- to C-terminus: Hemoglobin subunit alpha (142 aa).

The 141-residue stretch at 2–142 (VLSPADKSNV…VSTVLTSKYR (141 aa)) folds into the Globin domain. A Phosphoserine modification is found at serine 4. 2 positions are modified to N6-succinyllysine: lysine 8 and lysine 12. At lysine 17 the chain carries N6-acetyllysine; alternate. Lysine 17 carries the N6-succinyllysine; alternate modification. Phosphotyrosine is present on tyrosine 25. Serine 36 carries the phosphoserine modification. The residue at position 41 (lysine 41) is an N6-succinyllysine. Serine 50 is subject to Phosphoserine. Residue histidine 59 coordinates O2. Histidine 88 lines the heme b pocket. Serine 103 carries the post-translational modification Phosphoserine. Threonine 109 is subject to Phosphothreonine. 2 positions are modified to phosphoserine: serine 125 and serine 132. Phosphothreonine occurs at positions 135 and 138. A Phosphoserine modification is found at serine 139.

The protein belongs to the globin family. Heterotetramer of two alpha chains and two beta chains. Red blood cells.

In terms of biological role, involved in oxygen transport from the lung to the various peripheral tissues. Its function is as follows. Hemopressin acts as an antagonist peptide of the cannabinoid receptor CNR1. Hemopressin-binding efficiently blocks cannabinoid receptor CNR1 and subsequent signaling. The protein is Hemoglobin subunit alpha (HBA) of Chlorocebus aethiops (Green monkey).